Here is an 861-residue protein sequence, read N- to C-terminus: Protein argonaute-3 (861 aa).

Met-1 carries the post-translational modification N-acetylmethionine. A PAZ domain is found at 230-349 (PVIQFMCEVL…LPLEVCNIVA (120 aa)). The Piwi domain occupies 518-820 (LIIVILPGKT…VAFRARYHLV (303 aa)). The segment at 530–567 (YAEVKRVGDTLLGMATQCVQVKNVIKTSPQTLSNLCLK) is interaction with guide RNA. Residues Asp-598, Glu-638, and Asp-670 each coordinate a divalent metal cation. The interaction with guide RNA stretch occupies residues 758-806 (QGTSRPSHYHVLWDDNCFTADELQLLTYQPSAHTYVHCTRSVSIPAPAY). His-809 is a binding site for a divalent metal cation. The segment at 824-847 (RDSAEGSHVSGQSNGRDPQALAKA) is disordered. Residue Ser-826 is modified to Phosphoserine.

This sequence belongs to the argonaute family. Ago subfamily. As to quaternary structure, interacts with EIF4B, IMP8, PRMT5 and TNRC6B. Interacts with APOBEC3F, APOBEC3G and APOBEC3H. Interacts with EDC4. In terms of processing, ubiquitinated on surface-exposed lysines by a SCF-like E3 ubiquitin-protein ligase complex containing ZSWIM8 during target-directed microRNA degradation (TDMD), a process that mediates degradation of microRNAs (miRNAs). Ubiquitination by the SCF-like E3 ubiquitin-protein ligase complex containing ZSWIM8 leads to its subsequent degradation, thereby exposing miRNAs for degradation. ZSWIM8 recognizes and binds AGO3 when it is engaged with a TDMD target.

The protein localises to the cytoplasm. Its subcellular location is the P-body. It catalyses the reaction Endonucleolytic cleavage to 5'-phosphomonoester.. Its function is as follows. Required for RNA-mediated gene silencing (RNAi). Binds to short RNAs such as microRNAs (miRNAs) and represses the translation of mRNAs which are complementary to them. Proposed to be involved in stabilization of small RNA derivates (siRNA) derived from processed RNA polymerase III-transcribed Alu repeats containing a DR2 retinoic acid response element (RARE) in stem cells and in the subsequent siRNA-dependent degradation of a subset of RNA polymerase II-transcribed coding mRNAs by recruiting a mRNA decapping complex involving EDC4. Possesses RNA slicer activity but only on select RNAs bearing 5'- and 3'-flanking sequences to the region of guide-target complementarity. The protein is Protein argonaute-3 (AGO3) of Bos taurus (Bovine).